Here is a 53-residue protein sequence, read N- to C-terminus: Lantibiotic paenibacillin (53 aa).

Positions 1-24 (MKVDQMFDLDLRKSYEASELSPQA) are excised as a propeptide. Position 24 is an N-acetylalanine (A24). S25 is modified (2,3-didehydroalanine (Ser)). 2,3-didehydrobutyrine is present on residues T29 and T30. A cross-link (lanthionine (Ser-Cys)) is located at residues 34–38 (SKAVC). 3 consecutive cross-links (beta-methyllanthionine (Thr-Cys)) follow at residues 40 to 43 (TLTC), 42 to 45 (TCIC), and 46 to 49 (TGSC). Positions 48 to 52 (SCSNC) form a cross-link, lanthionine (Ser-Cys). S50 carries the post-translational modification 2,3-didehydroalanine (Ser).

In terms of processing, maturation of lantibiotics involves the enzymatic conversion of Thr, and Ser into dehydrated AA and the formation of thioether bonds with cysteine. This is followed by membrane translocation and cleavage of the modified precursor. Post-translationally, the structure of the 2,3-didehydrobutyrines is not discussed in PubMed:17071789.

The protein localises to the secreted. In terms of biological role, lanthionine-containing peptide antibiotic (lantibiotic) active on Gram-positive bacteria. The bactericidal activity of lantibiotics is based on depolarization of energized bacterial cytoplasmic membranes, initiated by the formation of aqueous transmembrane pores. Lacks antibacterial activity against Gram-negative bacteria. The chain is Lantibiotic paenibacillin from Paenibacillus polymyxa (Bacillus polymyxa).